A 280-amino-acid chain; its full sequence is 4-diphosphocytidyl-2-C-methyl-D-erythritol kinase (280 aa).

The active site involves K8. Position 91–101 (91–101) interacts with ATP; the sequence is PIEAGLAGGSS. D133 is an active-site residue.

The protein belongs to the GHMP kinase family. IspE subfamily.

The enzyme catalyses 4-CDP-2-C-methyl-D-erythritol + ATP = 4-CDP-2-C-methyl-D-erythritol 2-phosphate + ADP + H(+). It functions in the pathway isoprenoid biosynthesis; isopentenyl diphosphate biosynthesis via DXP pathway; isopentenyl diphosphate from 1-deoxy-D-xylulose 5-phosphate: step 3/6. In terms of biological role, catalyzes the phosphorylation of the position 2 hydroxy group of 4-diphosphocytidyl-2C-methyl-D-erythritol. The sequence is that of 4-diphosphocytidyl-2-C-methyl-D-erythritol kinase from Clostridium tetani (strain Massachusetts / E88).